Reading from the N-terminus, the 111-residue chain is uncharacterized protein (111 aa).

This sequence belongs to the asfivirus E111R family.

This is an uncharacterized protein from African swine fever virus (isolate Pig/Kenya/KEN-50/1950) (ASFV).